The chain runs to 117 residues: Photosystem II reaction center Psb28 protein (117 aa).

The protein belongs to the Psb28 family. In terms of assembly, part of the photosystem II complex.

It is found in the cellular thylakoid membrane. This Prochlorococcus marinus (strain MIT 9312) protein is Photosystem II reaction center Psb28 protein.